A 204-amino-acid polypeptide reads, in one-letter code: 3-isopropylmalate dehydratase small subunit (204 aa).

Belongs to the LeuD family. LeuD type 1 subfamily. In terms of assembly, heterodimer of LeuC and LeuD.

The enzyme catalyses (2R,3S)-3-isopropylmalate = (2S)-2-isopropylmalate. Its pathway is amino-acid biosynthesis; L-leucine biosynthesis; L-leucine from 3-methyl-2-oxobutanoate: step 2/4. In terms of biological role, catalyzes the isomerization between 2-isopropylmalate and 3-isopropylmalate, via the formation of 2-isopropylmaleate. The sequence is that of 3-isopropylmalate dehydratase small subunit from Ruthia magnifica subsp. Calyptogena magnifica.